The sequence spans 604 residues: Proline--tRNA ligase (604 aa).

The protein belongs to the class-II aminoacyl-tRNA synthetase family. ProS type 1 subfamily. In terms of assembly, homodimer.

The protein localises to the cytoplasm. The enzyme catalyses tRNA(Pro) + L-proline + ATP = L-prolyl-tRNA(Pro) + AMP + diphosphate. Catalyzes the attachment of proline to tRNA(Pro) in a two-step reaction: proline is first activated by ATP to form Pro-AMP and then transferred to the acceptor end of tRNA(Pro). As ProRS can inadvertently accommodate and process non-cognate amino acids such as alanine and cysteine, to avoid such errors it has two additional distinct editing activities against alanine. One activity is designated as 'pretransfer' editing and involves the tRNA(Pro)-independent hydrolysis of activated Ala-AMP. The other activity is designated 'posttransfer' editing and involves deacylation of mischarged Ala-tRNA(Pro). The misacylated Cys-tRNA(Pro) is not edited by ProRS. This chain is Proline--tRNA ligase, found in Trichormus variabilis (strain ATCC 29413 / PCC 7937) (Anabaena variabilis).